A 626-amino-acid chain; its full sequence is Phosphomethylpyrimidine synthase (626 aa).

Residues asparagine 237, methionine 266, tyrosine 295, histidine 331, 351 to 353, 392 to 395, and glutamate 431 each bind substrate; these read SRG and DGLR. Histidine 435 is a Zn(2+) binding site. Tyrosine 458 serves as a coordination point for substrate. Residue histidine 499 coordinates Zn(2+). The [4Fe-4S] cluster site is built by cysteine 579, cysteine 582, and cysteine 587.

Belongs to the ThiC family. As to quaternary structure, homodimer. Requires [4Fe-4S] cluster as cofactor.

The catalysed reaction is 5-amino-1-(5-phospho-beta-D-ribosyl)imidazole + S-adenosyl-L-methionine = 4-amino-2-methyl-5-(phosphooxymethyl)pyrimidine + CO + 5'-deoxyadenosine + formate + L-methionine + 3 H(+). Its pathway is cofactor biosynthesis; thiamine diphosphate biosynthesis. Its function is as follows. Catalyzes the synthesis of the hydroxymethylpyrimidine phosphate (HMP-P) moiety of thiamine from aminoimidazole ribotide (AIR) in a radical S-adenosyl-L-methionine (SAM)-dependent reaction. The sequence is that of Phosphomethylpyrimidine synthase from Cupriavidus pinatubonensis (strain JMP 134 / LMG 1197) (Cupriavidus necator (strain JMP 134)).